Reading from the N-terminus, the 923-residue chain is Inorganic phosphate transporter PHO87 (923 aa).

An SPX domain is found at 1–334 (MRFSHFLKYN…HMNTRQELIE (334 aa)). Residues 1 to 461 (MRFSHFLKYN…KLFFGKRAMK (461 aa)) lie on the Extracellular side of the membrane. 2 disordered regions span residues 40–74 (ETPT…SSSK) and 86–107 (FGSK…IDGN). Residues 95-104 (KRGDSDEKAI) show a composition bias toward basic and acidic residues. A Glycyl lysine isopeptide (Lys-Gly) (interchain with G-Cter in ubiquitin) cross-link involves residue Lys102. N-linked (GlcNAc...) asparagine glycosylation is found at Asn162, Asn202, and Asn274. Residues 462–482 (IGFIIIVTGVLLGVKTFNDPV) form a helical membrane-spanning segment. Topologically, residues 483–493 (EHRCMALVECC) are cytoplasmic. The helical transmembrane segment at 494–514 (AFLWASEAIPLHITGLLVPLL) threads the bilayer. Residues 515–537 (TVLFRVLKDDDGKVMGAAAASTE) are Extracellular-facing. Residues 538-558 (ILGTMWSSTIMILLAGFTLGE) traverse the membrane as a helical segment. At 559-583 (ALSQYNVAKVLASWLLALAGTKPRN) the chain is on the cytoplasmic side. Residues 584-604 (VLLMAMSVVFFLSMWISNVAS) form a helical membrane-spanning segment. Over 605 to 627 (PVLTYSLLTPLLDPLDYTSPFAK) the chain is Extracellular. A helical membrane pass occupies residues 628–648 (ALVMGVALSADIGGMASPISS). Topologically, residues 649-667 (PQNIISMQYLKPYGIGWGQ) are cytoplasmic. A helical transmembrane segment spans residues 668-688 (FFAVALPTGILSMLCSWALMI). The Extracellular segment spans residues 689 to 707 (LTFKIGKTKLEKFKPIRTR). Residues 708–728 (FTIKQYFIIIVTIATILLWCV) traverse the membrane as a helical segment. Residues 729 to 735 (ESQIESA) lie on the Cytoplasmic side of the membrane. The helical transmembrane segment at 736-756 (FGSSGEIAVIPIVLFFGTGLL) threads the bilayer. The Extracellular portion of the chain corresponds to 757–767 (STKDFNTFPWS). Residues 768–788 (IVVLAMGGIALGKAVSSSGLL) form a helical membrane-spanning segment. Topologically, residues 789-802 (VTIARALQKKIQND) are cytoplasmic. A helical transmembrane segment spans residues 803–823 (GVFAILCIFGILMLVVGTFVS). Residues 824–849 (HTVSAIIIIPLVQEVGDKLSDPKAAP) are Extracellular-facing. The chain crosses the membrane as a helical span at residues 850–870 (ILVFGCALLASCGMGLASSGF). At 871 to 898 (PNVTAISMTDKKGNRWLTVGAFISRGVP) the chain is on the cytoplasmic side. The chain crosses the membrane as a helical span at residues 899–919 (ASLLAFVCVITLGYGISSSVL). Topologically, residues 920–923 (KGST) are extracellular.

It belongs to the CitM (TC 2.A.11) transporter family.

It is found in the membrane. Functionally, involved in the uptake of inorganic phosphate. The protein is Inorganic phosphate transporter PHO87 (PHO87) of Saccharomyces cerevisiae (strain ATCC 204508 / S288c) (Baker's yeast).